The chain runs to 310 residues: Aspartate carbamoyltransferase catalytic subunit (310 aa).

Carbamoyl phosphate contacts are provided by R59 and T60. K87 is a binding site for L-aspartate. Carbamoyl phosphate-binding residues include R109, H137, and Q140. L-aspartate is bound by residues R170 and R225. Carbamoyl phosphate is bound by residues G266 and P267.

Belongs to the aspartate/ornithine carbamoyltransferase superfamily. ATCase family. In terms of assembly, heterododecamer (2C3:3R2) of six catalytic PyrB chains organized as two trimers (C3), and six regulatory PyrI chains organized as three dimers (R2).

It catalyses the reaction carbamoyl phosphate + L-aspartate = N-carbamoyl-L-aspartate + phosphate + H(+). It participates in pyrimidine metabolism; UMP biosynthesis via de novo pathway; (S)-dihydroorotate from bicarbonate: step 2/3. Its function is as follows. Catalyzes the condensation of carbamoyl phosphate and aspartate to form carbamoyl aspartate and inorganic phosphate, the committed step in the de novo pyrimidine nucleotide biosynthesis pathway. The polypeptide is Aspartate carbamoyltransferase catalytic subunit (Pelobacter propionicus (strain DSM 2379 / NBRC 103807 / OttBd1)).